Reading from the N-terminus, the 437-residue chain is MGNNVVVLGTQWGDEGKGKVVDLLTDKAQWVVRYQGGHNAGHTLVIDGEKTVLHLIPSGILRDNVKCVIGNGVVLSPEALLEELKMLEDRGVPAKERLHISEGCPLILPYHIALDAARELARGDKAIGTTGRGIGPAYEDKVARRGLRVDDLFNMETFAVKLKEVIDYHNFQLVNYYKVEAVNFDEVLKQVQSVADLLISLVIDVTDELDKARLRGENILFEGAQGTLLDIDHGTYPYVTSSNTTAGGVATGSGFGPAHIDYVLGIVKAYTTRVGSGPFPTELYDGVDKLDPAGKHLGTVGHEFGATTGRLRRTGWFDAVAIKRAVQLNSITGFCLTKLDVLDGLEEIKICTAYKMPGDKLVDVPPMSAEGYEQAVPVYETVPGWTESSFGVTSFDALPKNAQAYVRRLEEITGIPMDIISTGPDRNETMIQVNPFN.

GTP-binding positions include 13 to 19 (GDEGKGK) and 41 to 43 (GHT). Aspartate 14 (proton acceptor) is an active-site residue. The Mg(2+) site is built by aspartate 14 and glycine 41. IMP is bound by residues 14–17 (DEGK), 39–42 (NAGH), threonine 130, arginine 144, glutamine 225, threonine 240, and arginine 310. Histidine 42 (proton donor) is an active-site residue. Position 306 to 312 (306 to 312 (ATTGRLR)) interacts with substrate. Residues arginine 312, 338-340 (KLD), and 421-423 (STG) contribute to the GTP site.

The protein belongs to the adenylosuccinate synthetase family. In terms of assembly, homodimer. Mg(2+) is required as a cofactor.

Its subcellular location is the cytoplasm. It catalyses the reaction IMP + L-aspartate + GTP = N(6)-(1,2-dicarboxyethyl)-AMP + GDP + phosphate + 2 H(+). It participates in purine metabolism; AMP biosynthesis via de novo pathway; AMP from IMP: step 1/2. Plays an important role in the de novo pathway of purine nucleotide biosynthesis. Catalyzes the first committed step in the biosynthesis of AMP from IMP. This is Adenylosuccinate synthetase from Psychromonas ingrahamii (strain DSM 17664 / CCUG 51855 / 37).